The sequence spans 483 residues: Matrix metalloproteinase-20 (483 aa).

Residues M1–A22 form the signal peptide. Residues A23–N107 constitute a propeptide, activation peptide. The Cysteine switch motif lies at P98 to V105. C100 lines the Zn(2+) pocket. Ca(2+)-binding residues include E164, A165, and D166. Zn(2+) is bound by residues H176 and D178. Ca(2+)-binding residues include D183, G184, R186, and T188. A Zn(2+)-binding site is contributed by H191. Residues E197, G198, G200, and D202 each coordinate Ca(2+). A Zn(2+)-binding site is contributed by H204. Ca(2+)-binding residues include D206 and E209. H226 is a binding site for Zn(2+). E227 is a catalytic residue. Zn(2+)-binding residues include H230 and H236. 4 Hemopexin repeats span residues P293–L343, M344–R389, V391–V439, and N440–C483. C296 and C483 are joined by a disulfide.

Belongs to the peptidase M10A family. Zn(2+) serves as cofactor. Ca(2+) is required as a cofactor. In terms of processing, autoactivates at least at the 107-Asn-|-Tyr-108 site. Expressed specifically in the enamel organ.

It localises to the secreted. The protein localises to the extracellular space. The protein resides in the extracellular matrix. Degrades amelogenin, the major protein component of the enamel matrix and two of the macromolecules characterizing the cartilage extracellular matrix: aggrecan and the cartilage oligomeric matrix protein (COMP). May play a central role in tooth enamel formation. The polypeptide is Matrix metalloproteinase-20 (MMP20) (Sus scrofa (Pig)).